Here is a 395-residue protein sequence, read N- to C-terminus: Secreted aspartyl protease 1 (395 aa).

The signal sequence occupies residues 1 to 20 (MQLSIQAIIGFVVAAGLAVA). Positions 21–88 (SELPSPMTVN…HLLLDLIDKR (68 aa)) are cleaved as a propeptide — removed in mature form. Asn-41 carries N-linked (GlcNAc...) asparagine glycosylation. In terms of domain architecture, Peptidase A1 spans 105–391 (WAGDVQFGQS…DMGKNRMGFA (287 aa)). Active-site residues include Asp-121 and Asp-283. The cysteines at positions 321 and 352 are disulfide-linked.

It belongs to the peptidase A1 family.

The protein resides in the secreted. With respect to regulation, inhibited by pepstatin A. Functionally, dominant secreted aspartyl protease that has a clear preference for aromatic residues in the P1' position directly adjacent to the cleavage site and, in particular, Trp. In addition, it generally cleaves peptides containing Lys, Arg, Phe, Tyr, or Nle (norleucine) in the P1 position, Nle and Glu at P2, and Arg and Val at P2'. Has important roles in facilitating the interaction of the yeast with the external environment. Is able to rapidly hydrolyze Staphylococcus aureus protein A, an important S.aureus virulence factor involved in immune evasion and biofilm formation. Shows anti-biofilm properties and thus plays a role in inter-kingdom interactions, beneficial for host skin health. In Malassezia globosa (strain ATCC MYA-4612 / CBS 7966) (Dandruff-associated fungus), this protein is Secreted aspartyl protease 1.